A 335-amino-acid chain; its full sequence is Nuclear transcription factor Y subunit gamma (335 aa).

The protein belongs to the NFYC/HAP5 subunit family. As to quaternary structure, heterotrimeric transcription factor composed of three components, NF-YA, NF-YB and NF-YC. NF-YB and NF-YC must interact and dimerize for NF-YA association and DNA binding.

The protein resides in the nucleus. In terms of biological role, component of the sequence-specific heterotrimeric transcription factor (NF-Y) which specifically recognizes a 5'-CCAAT-3' box motif found in the promoters of its target genes. NF-Y can function as both an activator and a repressor, depending on its interacting cofactors. The sequence is that of Nuclear transcription factor Y subunit gamma (Nfyc) from Rattus norvegicus (Rat).